Consider the following 651-residue polypeptide: DNA mismatch repair protein MutL (651 aa).

Residues 336 to 398 are disordered; the sequence is RLDMTEPETG…ANSGYQPENP (63 aa). The span at 385–394 shows a compositional bias: polar residues; the sequence is ARESANSGYQ.

Belongs to the DNA mismatch repair MutL/HexB family.

In terms of biological role, this protein is involved in the repair of mismatches in DNA. It is required for dam-dependent methyl-directed DNA mismatch repair. May act as a 'molecular matchmaker', a protein that promotes the formation of a stable complex between two or more DNA-binding proteins in an ATP-dependent manner without itself being part of a final effector complex. This chain is DNA mismatch repair protein MutL, found in Pectobacterium atrosepticum (strain SCRI 1043 / ATCC BAA-672) (Erwinia carotovora subsp. atroseptica).